A 474-amino-acid polypeptide reads, in one-letter code: Siroheme synthase (474 aa).

Residues 1 to 203 (MDYLPIFLKL…GRAEDAERVL (203 aa)) form a precorrin-2 dehydrogenase /sirohydrochlorin ferrochelatase region. Residues 22-23 (EV) and 43-44 (AS) contribute to the NAD(+) site. Positions 219–474 (GSVALVGAGP…QETEGRSGNG (256 aa)) are uroporphyrinogen-III C-methyltransferase. Residue Pro228 coordinates S-adenosyl-L-methionine. Asp251 acts as the Proton acceptor in catalysis. The active-site Proton donor is the Lys273. S-adenosyl-L-methionine is bound by residues 304–306 (GGD), Ile309, 334–335 (TA), Met387, and Gly416.

This sequence in the N-terminal section; belongs to the precorrin-2 dehydrogenase / sirohydrochlorin ferrochelatase family. It in the C-terminal section; belongs to the precorrin methyltransferase family.

It catalyses the reaction uroporphyrinogen III + 2 S-adenosyl-L-methionine = precorrin-2 + 2 S-adenosyl-L-homocysteine + H(+). It carries out the reaction precorrin-2 + NAD(+) = sirohydrochlorin + NADH + 2 H(+). The catalysed reaction is siroheme + 2 H(+) = sirohydrochlorin + Fe(2+). It participates in cofactor biosynthesis; adenosylcobalamin biosynthesis; precorrin-2 from uroporphyrinogen III: step 1/1. Its pathway is cofactor biosynthesis; adenosylcobalamin biosynthesis; sirohydrochlorin from precorrin-2: step 1/1. It functions in the pathway porphyrin-containing compound metabolism; siroheme biosynthesis; precorrin-2 from uroporphyrinogen III: step 1/1. The protein operates within porphyrin-containing compound metabolism; siroheme biosynthesis; siroheme from sirohydrochlorin: step 1/1. It participates in porphyrin-containing compound metabolism; siroheme biosynthesis; sirohydrochlorin from precorrin-2: step 1/1. Functionally, multifunctional enzyme that catalyzes the SAM-dependent methylations of uroporphyrinogen III at position C-2 and C-7 to form precorrin-2 via precorrin-1. Then it catalyzes the NAD-dependent ring dehydrogenation of precorrin-2 to yield sirohydrochlorin. Finally, it catalyzes the ferrochelation of sirohydrochlorin to yield siroheme. This is Siroheme synthase from Methylococcus capsulatus (strain ATCC 33009 / NCIMB 11132 / Bath).